The chain runs to 133 residues: Ribosome-binding factor A (133 aa).

It belongs to the RbfA family. As to quaternary structure, monomer. Binds 30S ribosomal subunits, but not 50S ribosomal subunits or 70S ribosomes.

It is found in the cytoplasm. Functionally, one of several proteins that assist in the late maturation steps of the functional core of the 30S ribosomal subunit. Associates with free 30S ribosomal subunits (but not with 30S subunits that are part of 70S ribosomes or polysomes). Required for efficient processing of 16S rRNA. May interact with the 5'-terminal helix region of 16S rRNA. The sequence is that of Ribosome-binding factor A from Trichormus variabilis (strain ATCC 29413 / PCC 7937) (Anabaena variabilis).